We begin with the raw amino-acid sequence, 141 residues long: Small ribosomal subunit protein bS6 (141 aa).

The interval 97 to 141 is disordered; that stretch reads TGQSEMLKAEENRSERRERRDRPEHADSADGDDSDNSDASDNADE. The segment covering 103 to 124 has biased composition (basic and acidic residues); it reads LKAEENRSERRERRDRPEHADS. The span at 125-141 shows a compositional bias: acidic residues; the sequence is ADGDDSDNSDASDNADE.

This sequence belongs to the bacterial ribosomal protein bS6 family.

In terms of biological role, binds together with bS18 to 16S ribosomal RNA. This Pseudomonas fluorescens (strain ATCC BAA-477 / NRRL B-23932 / Pf-5) protein is Small ribosomal subunit protein bS6.